Consider the following 480-residue polypeptide: Chromosomal replication initiator protein DnaA (480 aa).

Residues 1 to 71 (MNLTKVWNTT…REQLGSVVGF (71 aa)) form a domain I, interacts with DnaA modulators region. Residues 71–139 (FPVDVRIVLA…LELHRAVRSS (69 aa)) form a domain II region. The tract at residues 91–115 (SINGRHAARDTRKSDHHAPLSGGYG) is disordered. A compositionally biased stretch (basic and acidic residues) spans 97–108 (AARDTRKSDHHA). The segment at 140-356 (MLNPRYTFDR…GCLNRVTAYA (217 aa)) is domain III, AAA+ region. Residues glycine 184, glycine 186, lysine 187, and threonine 188 each contribute to the ATP site. Residues 357 to 480 (QMYNIPVTIE…IRERLMNSAV (124 aa)) form a domain IV, binds dsDNA region.

It belongs to the DnaA family. Oligomerizes as a right-handed, spiral filament on DNA at oriC.

Its subcellular location is the cytoplasm. Plays an essential role in the initiation and regulation of chromosomal replication. ATP-DnaA binds to the origin of replication (oriC) to initiate formation of the DNA replication initiation complex once per cell cycle. Binds the DnaA box (a 9 base pair repeat at the origin) and separates the double-stranded (ds)DNA. Forms a right-handed helical filament on oriC DNA; dsDNA binds to the exterior of the filament while single-stranded (ss)DNA is stabiized in the filament's interior. The ATP-DnaA-oriC complex binds and stabilizes one strand of the AT-rich DNA unwinding element (DUE), permitting loading of DNA polymerase. After initiation quickly degrades to an ADP-DnaA complex that is not apt for DNA replication. Binds acidic phospholipids. In Roseiflexus castenholzii (strain DSM 13941 / HLO8), this protein is Chromosomal replication initiator protein DnaA.